The following is a 192-amino-acid chain: Fe/S biogenesis protein NfuA (192 aa).

Positions 149 and 152 each coordinate [4Fe-4S] cluster.

Belongs to the NfuA family. Homodimer. The cofactor is [4Fe-4S] cluster.

Involved in iron-sulfur cluster biogenesis. Binds a 4Fe-4S cluster, can transfer this cluster to apoproteins, and thereby intervenes in the maturation of Fe/S proteins. Could also act as a scaffold/chaperone for damaged Fe/S proteins. The polypeptide is Fe/S biogenesis protein NfuA (Shewanella halifaxensis (strain HAW-EB4)).